The following is a 98-amino-acid chain: Large ribosomal subunit protein uL23 (98 aa).

The protein belongs to the universal ribosomal protein uL23 family. Part of the 50S ribosomal subunit. Contacts protein L29, and trigger factor when it is bound to the ribosome.

One of the early assembly proteins it binds 23S rRNA. One of the proteins that surrounds the polypeptide exit tunnel on the outside of the ribosome. Forms the main docking site for trigger factor binding to the ribosome. This Methylobacterium radiotolerans (strain ATCC 27329 / DSM 1819 / JCM 2831 / NBRC 15690 / NCIMB 10815 / 0-1) protein is Large ribosomal subunit protein uL23.